The sequence spans 82 residues: ATP synthase subunit c (82 aa).

A run of 2 helical transmembrane segments spans residues 7–27 and 53–73; these read FVAL…CIGI and FLLA…AMMF.

It belongs to the ATPase C chain family. In terms of assembly, F-type ATPases have 2 components, F(1) - the catalytic core - and F(0) - the membrane proton channel. F(1) has five subunits: alpha(3), beta(3), gamma(1), delta(1), epsilon(1). F(0) has three main subunits: a(1), b(2) and c(10-14). The alpha and beta chains form an alternating ring which encloses part of the gamma chain. F(1) is attached to F(0) by a central stalk formed by the gamma and epsilon chains, while a peripheral stalk is formed by the delta and b chains.

It localises to the cell inner membrane. F(1)F(0) ATP synthase produces ATP from ADP in the presence of a proton or sodium gradient. F-type ATPases consist of two structural domains, F(1) containing the extramembraneous catalytic core and F(0) containing the membrane proton channel, linked together by a central stalk and a peripheral stalk. During catalysis, ATP synthesis in the catalytic domain of F(1) is coupled via a rotary mechanism of the central stalk subunits to proton translocation. Functionally, key component of the F(0) channel; it plays a direct role in translocation across the membrane. A homomeric c-ring of between 10-14 subunits forms the central stalk rotor element with the F(1) delta and epsilon subunits. In Aromatoleum aromaticum (strain DSM 19018 / LMG 30748 / EbN1) (Azoarcus sp. (strain EbN1)), this protein is ATP synthase subunit c.